Consider the following 422-residue polypeptide: 3-phosphoshikimate 1-carboxyvinyltransferase (422 aa).

3-phosphoshikimate contacts are provided by K20, S21, and R25. Position 20 (K20) interacts with phosphoenolpyruvate. G91 and R119 together coordinate phosphoenolpyruvate. 3-phosphoshikimate-binding residues include T163, S164, Q165, D305, Q328, and K332. Position 165 (Q165) interacts with phosphoenolpyruvate. Residue D305 is the Proton acceptor of the active site. Phosphoenolpyruvate contacts are provided by R336 and R377.

This sequence belongs to the EPSP synthase family. Monomer.

It localises to the cytoplasm. The catalysed reaction is 3-phosphoshikimate + phosphoenolpyruvate = 5-O-(1-carboxyvinyl)-3-phosphoshikimate + phosphate. The protein operates within metabolic intermediate biosynthesis; chorismate biosynthesis; chorismate from D-erythrose 4-phosphate and phosphoenolpyruvate: step 6/7. Functionally, catalyzes the transfer of the enolpyruvyl moiety of phosphoenolpyruvate (PEP) to the 5-hydroxyl of shikimate-3-phosphate (S3P) to produce enolpyruvyl shikimate-3-phosphate and inorganic phosphate. The protein is 3-phosphoshikimate 1-carboxyvinyltransferase of Ruminiclostridium cellulolyticum (strain ATCC 35319 / DSM 5812 / JCM 6584 / H10) (Clostridium cellulolyticum).